The chain runs to 252 residues: MFS-type transporter cctQ (252 aa).

2 helical membrane passes run Ile-54–Pro-74 and Phe-116–Phe-136. Asn-179 carries an N-linked (GlcNAc...) asparagine glycan. Transmembrane regions (helical) follow at residues Phe-180–Ala-200 and Phe-208–Thr-228.

This sequence belongs to the major facilitator superfamily.

The protein localises to the membrane. It functions in the pathway mycotoxin biosynthesis. In terms of biological role, MFS-type transporter; part of the gene cluster that mediates the biosynthesis of the mycotoxin cyclochlorotine, a hepatotoxic and carcinogenic cyclic chlorinated pentapeptide. Most likely responsible for cyclochlorotine secretion and thereby may contribute to intrinsic resistance. The protein is MFS-type transporter cctQ of Talaromyces islandicus (Penicillium islandicum).